We begin with the raw amino-acid sequence, 451 residues long: Transcription factor TGAL8 (451 aa).

Residues Met-1 to Arg-22 show a composition bias toward polar residues. 2 disordered regions span residues Met-1–Ser-32 and Phe-70–Leu-151. Basic and acidic residues predominate over residues Lys-141–Thr-150. One can recognise a bZIP domain in the interval Asp-147–Phe-191. The interval Lys-149–Lys-169 is basic motif. The interval Leu-175–Ile-189 is leucine-zipper. Residues Ala-208–Thr-444 form the DOG1 domain.

This sequence belongs to the bZIP family. In terms of assembly, interacts with NPR5/NH4, NH5.1 and NH5.2.

The protein localises to the nucleus. Functionally, transcriptional regulator involved in defense response. This Oryza sativa subsp. japonica (Rice) protein is Transcription factor TGAL8.